Reading from the N-terminus, the 338-residue chain is Glyceraldehyde-3-phosphate dehydrogenase 2 (338 aa).

NAD(+) is bound by residues 12 to 13 (RI), D34, and R79. D-glyceraldehyde 3-phosphate is bound by residues 150 to 152 (SCT), T181, 210 to 211 (TG), and R233. C151 functions as the Nucleophile in the catalytic mechanism. N315 contributes to the NAD(+) binding site.

Belongs to the glyceraldehyde-3-phosphate dehydrogenase family. As to quaternary structure, homotetramer.

It localises to the cytoplasm. The enzyme catalyses D-glyceraldehyde 3-phosphate + phosphate + NAD(+) = (2R)-3-phospho-glyceroyl phosphate + NADH + H(+). It functions in the pathway carbohydrate degradation; glycolysis; pyruvate from D-glyceraldehyde 3-phosphate: step 1/5. The protein is Glyceraldehyde-3-phosphate dehydrogenase 2 (GPD2) of Mucor circinelloides f. lusitanicus (Mucor racemosus var. lusitanicus).